We begin with the raw amino-acid sequence, 314 residues long: Deoxymugineic acid synthase 1-B (314 aa).

The segment at 1–22 (MGAGDKTAAGMPRIGMGTAVQG) is disordered. Aspartate 44 lines the NADP(+) pocket. Tyrosine 49 serves as the catalytic Proton donor. Histidine 112 is a substrate binding site. Residues 158-159 (AN), glutamine 180, 258-266 (FDEARMREN), and 273-281 (ELTEEERRR) each bind NADP(+).

This sequence belongs to the aldo/keto reductase family. As to expression, mostly expressed in root tissues, observed in mesocotyl and embryonic roots, seedling roots, crown and seedling leafes, mature bracts, anthers, pistil, caryopsis and embryos.

The enzyme catalyses 2'-deoxymugineate + NAD(+) = 3''-deamino-3''-oxonicotianamine + NADH + H(+). It catalyses the reaction 2'-deoxymugineate + NADP(+) = 3''-deamino-3''-oxonicotianamine + NADPH + H(+). It functions in the pathway siderophore biosynthesis. Functionally, catalyzes the reduction of a 3''-keto intermediate during the biosynthesis of 2'-deoxymugineic acid (DMA) from L-Met. Involved in the formation of phytosiderophores (MAs) belonging to the mugineic acid family and required to acquire iron. This chain is Deoxymugineic acid synthase 1-B, found in Triticum aestivum (Wheat).